A 417-amino-acid chain; its full sequence is Multifunctional CCA protein (417 aa).

ATP is bound by residues glycine 8 and arginine 11. CTP contacts are provided by glycine 8 and arginine 11. Mg(2+) is bound by residues aspartate 21 and aspartate 23. Residues arginine 91, arginine 137, and arginine 140 each coordinate ATP. CTP contacts are provided by arginine 91, arginine 137, and arginine 140. In terms of domain architecture, HD spans 225–326; the sequence is SGIHTLMTLQ…LNVLKKTDAF (102 aa).

It belongs to the tRNA nucleotidyltransferase/poly(A) polymerase family. Bacterial CCA-adding enzyme type 1 subfamily. As to quaternary structure, monomer. Can also form homodimers and oligomers. Mg(2+) is required as a cofactor. Ni(2+) serves as cofactor.

It catalyses the reaction a tRNA precursor + 2 CTP + ATP = a tRNA with a 3' CCA end + 3 diphosphate. The enzyme catalyses a tRNA with a 3' CCA end + 2 CTP + ATP = a tRNA with a 3' CCACCA end + 3 diphosphate. Its function is as follows. Catalyzes the addition and repair of the essential 3'-terminal CCA sequence in tRNAs without using a nucleic acid template. Adds these three nucleotides in the order of C, C, and A to the tRNA nucleotide-73, using CTP and ATP as substrates and producing inorganic pyrophosphate. tRNA 3'-terminal CCA addition is required both for tRNA processing and repair. Also involved in tRNA surveillance by mediating tandem CCA addition to generate a CCACCA at the 3' terminus of unstable tRNAs. While stable tRNAs receive only 3'-terminal CCA, unstable tRNAs are marked with CCACCA and rapidly degraded. This chain is Multifunctional CCA protein, found in Neisseria meningitidis serogroup C / serotype 2a (strain ATCC 700532 / DSM 15464 / FAM18).